The following is a 130-amino-acid chain: Small ribosomal subunit protein uS9 (130 aa).

It belongs to the universal ribosomal protein uS9 family.

In Shewanella denitrificans (strain OS217 / ATCC BAA-1090 / DSM 15013), this protein is Small ribosomal subunit protein uS9.